A 146-amino-acid polypeptide reads, in one-letter code: Putative pre-16S rRNA nuclease (146 aa).

Belongs to the YqgF nuclease family.

Its subcellular location is the cytoplasm. Its function is as follows. Could be a nuclease involved in processing of the 5'-end of pre-16S rRNA. The protein is Putative pre-16S rRNA nuclease of Pseudomonas syringae pv. tomato (strain ATCC BAA-871 / DC3000).